Here is a 28-residue protein sequence, read N- to C-terminus: Putative GDSL-motif lipase/hydrolase-like protein (28 aa).

Belongs to the 'GDSL' lipolytic enzyme family.

The sequence is that of Putative GDSL-motif lipase/hydrolase-like protein from Populus euphratica (Euphrates poplar).